The primary structure comprises 499 residues: Potassium channel subfamily K member 5 (499 aa).

Over 1–7 (MVDRGPL) the chain is Cytoplasmic. A helical membrane pass occupies residues 8 to 26 (LTSAIIFYLAIGAAIFEVL). The N-linked (GlcNAc...) asparagine glycan is linked to N77. An intramembrane region (pore-forming) is located at residues 85-112 (WPNAMIFAATVITTIGYGNVAPKTPAGR). T98, I99, G100, and Y101 together coordinate K(+). Positions 98-103 (TIGYGN) are selectivity filter 1. Residues 113–133 (LFCVFYGLFGVPLCLTWISAL) form a helical membrane-spanning segment. Residues 134 to 157 (GKFFGGRAKRLGQFLTKRGVSLRK) lie on the Cytoplasmic side of the membrane. Residues 158–180 (AQITCTVIFIVWGVLVHLVIPPF) traverse the membrane as a helical segment. The pore-forming intramembrane region spans 190–215 (YIEGLYYSFITISTIGFGDFVAGVNP). Residues T203, I204, G205, and F206 each coordinate K(+). Residues 203–208 (TIGFGD) are selectivity filter 2. Residues 230-250 (WIYLGLAWLSLFVNWKVSMFV) form a helical membrane-spanning segment. Topologically, residues 251–325 (EVHKAIKKRR…SGGGETGPGP (75 aa)) are cytoplasmic. 3 disordered regions span residues 312-335 (AMKTSGGGETGPGPGLGPQGGGLP), 360-388 (QTLRSKGHVSRSPDEEAVARAPEDSSPAP), and 428-499 (GLSD…PKGT). The span at 316–334 (SGGGETGPGPGLGPQGGGL) shows a compositional bias: gly residues. Basic and acidic residues predominate over residues 370 to 382 (RSPDEEAVARAPE). Position 371 is a phosphoserine (S371). The span at 466-480 (SSSESTFTSTESELS) shows a compositional bias: low complexity.

Belongs to the two pore domain potassium channel (TC 1.A.1.8) family. Homodimer; disulfide-linked. Heterodimer with KCNK16 and KCNK17. Abundant expression in kidney, also detected in liver, placenta and small intestine. In the kidney, expression is restricted to the distal tubules and collecting ducts. Not expressed in proximal tubules or glomeruli. Expressed in pancreas, in both endocrine (alpha, beta, gamma, delta, and epsilon) and exocrine (acinar and ductal) cells.

The protein localises to the membrane. The enzyme catalyses K(+)(in) = K(+)(out). With respect to regulation, the channel conductance is stimulated by extracellular alkaline pH. Inhibited by quinine, quinidine and external acidification. K(+) channel that conducts voltage-dependent outward rectifying currents upon membrane depolarization. Voltage sensing is coupled to K(+) electrochemical gradient in an 'ion flux gating' mode where outward but not inward ion flow opens the gate. Homo- and heterodimerizes to form functional channels with distinct regulatory and gating properties. This Homo sapiens (Human) protein is Potassium channel subfamily K member 5.